The primary structure comprises 256 residues: Small ribosomal subunit protein eS1B (256 aa).

Position 2 is an N-acetylalanine; partial (alanine 2).

The protein belongs to the eukaryotic ribosomal protein eS1 family. In terms of assembly, component of the small ribosomal subunit. Mature ribosomes consist of a small (40S) and a large (60S) subunit. The 40S subunit contains about 33 different proteins and 1 molecule of RNA (18S). The 60S subunit contains about 49 different proteins and 3 molecules of RNA (25S, 5.8S and 5S).

The protein localises to the cytoplasm. The protein is Small ribosomal subunit protein eS1B of Scheffersomyces stipitis (strain ATCC 58785 / CBS 6054 / NBRC 10063 / NRRL Y-11545) (Yeast).